Here is a 655-residue protein sequence, read N- to C-terminus: tRNA-guanine(15) transglycosylase (655 aa).

The active-site Nucleophile is the Asp-89. Residues Asp-124 and Ala-195 each coordinate substrate. Zn(2+) is bound by residues Cys-281, Cys-283, and Cys-286. One can recognise a PUA domain in the interval 577 to 652 (KYRVVVNKEA…LAVKVRGGLK (76 aa)).

Belongs to the archaeosine tRNA-ribosyltransferase family. Zn(2+) serves as cofactor.

The enzyme catalyses guanosine(15) in tRNA + 7-cyano-7-deazaguanine = 7-cyano-7-carbaguanosine(15) in tRNA + guanine. Its pathway is tRNA modification; archaeosine-tRNA biosynthesis. In terms of biological role, exchanges the guanine residue with 7-cyano-7-deazaguanine (preQ0) at position 15 in the dihydrouridine loop (D-loop) of archaeal tRNAs. Can also utilize guanine as substrate. This is tRNA-guanine(15) transglycosylase from Methanocaldococcus jannaschii (strain ATCC 43067 / DSM 2661 / JAL-1 / JCM 10045 / NBRC 100440) (Methanococcus jannaschii).